The following is a 347-amino-acid chain: NADH-ubiquinone oxidoreductase chain 2 (347 aa).

The next 10 helical transmembrane spans lie at P3–S23, Y59–L79, P95–V115, G127–P147, I149–G169, I178–P198, T200–M220, V241–I261, G274–M294, and L325–V345.

It belongs to the complex I subunit 2 family. Core subunit of respiratory chain NADH dehydrogenase (Complex I) which is composed of 45 different subunits. Interacts with TMEM242.

The protein localises to the mitochondrion inner membrane. It catalyses the reaction a ubiquinone + NADH + 5 H(+)(in) = a ubiquinol + NAD(+) + 4 H(+)(out). Its function is as follows. Core subunit of the mitochondrial membrane respiratory chain NADH dehydrogenase (Complex I) which catalyzes electron transfer from NADH through the respiratory chain, using ubiquinone as an electron acceptor. Essential for the catalytic activity and assembly of complex I. This Oryctolagus cuniculus (Rabbit) protein is NADH-ubiquinone oxidoreductase chain 2.